We begin with the raw amino-acid sequence, 250 residues long: Maleate isomerase (250 aa).

Substrate is bound by residues asparagine 15, 80–82 (CLV), tyrosine 137, and asparagine 167. Residue cysteine 80 is the Nucleophile of the active site. S-(2-succinyl)cysteine is present on cysteine 80. The active-site Proton donor is cysteine 198. 199–200 (VQ) is a substrate binding site.

The protein belongs to the maleate isomerase family. As to quaternary structure, homodimer.

It carries out the reaction maleate = fumarate. It participates in cofactor degradation; nicotinate degradation. Catalyzes cis-trans isomerization of the C2-C3 double bond in maleate to yield fumarate in the aerobic nicotinate degradation pathway. This is Maleate isomerase from Pseudomonas putida (strain ATCC 47054 / DSM 6125 / CFBP 8728 / NCIMB 11950 / KT2440).